The sequence spans 343 residues: CRISPR-associated endonuclease Cas1 1 (343 aa).

3 residues coordinate Mn(2+): Glu-166, His-234, and Glu-249.

The protein belongs to the CRISPR-associated endonuclease Cas1 family. Homodimer, forms a heterotetramer with a Cas2 homodimer. Mg(2+) serves as cofactor. Mn(2+) is required as a cofactor.

Its function is as follows. CRISPR (clustered regularly interspaced short palindromic repeat), is an adaptive immune system that provides protection against mobile genetic elements (viruses, transposable elements and conjugative plasmids). CRISPR clusters contain spacers, sequences complementary to antecedent mobile elements, and target invading nucleic acids. CRISPR clusters are transcribed and processed into CRISPR RNA (crRNA). Acts as a dsDNA endonuclease. Involved in the integration of spacer DNA into the CRISPR cassette. This is CRISPR-associated endonuclease Cas1 1 from Chlorobaculum tepidum (strain ATCC 49652 / DSM 12025 / NBRC 103806 / TLS) (Chlorobium tepidum).